The sequence spans 132 residues: Small ribosomal subunit protein uS8 (132 aa).

This sequence belongs to the universal ribosomal protein uS8 family. Part of the 30S ribosomal subunit. Contacts proteins S5 and S12.

Functionally, one of the primary rRNA binding proteins, it binds directly to 16S rRNA central domain where it helps coordinate assembly of the platform of the 30S subunit. The sequence is that of Small ribosomal subunit protein uS8 from Bacillus pumilus (strain SAFR-032).